A 393-amino-acid polypeptide reads, in one-letter code: MTVPATRQDLMIVNMGPHHPSMHGVLRLIVTLDGEDVIDCEPILGYLHRGMEKIAENRTIIQYLPYVTRWDYLATMFTEAITVNGPEQLGNIQIPKRASYIRVIMLELSRIASHLLWLGPFMADIGAQTPFFYIFRERELIYDLFEAATGMRMMHNYFRIGGVAADLPYGWIDKCLDFCDYFLTGIVEYEKLITQNPIFLERVERVGIISGEEAINWGLSGPMLRASGIEWDLRKVDNYECYNEFDWEVQWQKEGDSLARYLVRISEMKESIKIIQQALEGIPGGPYENLEVRRFDKVKDSEWNDFEYRFISKKPSPTFELAKQELYVRVEAPKGELGIFLIGDNSVFPWRWKIRPPGFINLQILPQLVKRMKLADIMTILGSIDIIMGEVDR.

The protein belongs to the complex I 49 kDa subunit family. As to quaternary structure, NDH is composed of at least 16 different subunits, 5 of which are encoded in the nucleus.

It localises to the plastid. The protein resides in the chloroplast thylakoid membrane. The catalysed reaction is a plastoquinone + NADH + (n+1) H(+)(in) = a plastoquinol + NAD(+) + n H(+)(out). It catalyses the reaction a plastoquinone + NADPH + (n+1) H(+)(in) = a plastoquinol + NADP(+) + n H(+)(out). Its function is as follows. NDH shuttles electrons from NAD(P)H:plastoquinone, via FMN and iron-sulfur (Fe-S) centers, to quinones in the photosynthetic chain and possibly in a chloroplast respiratory chain. The immediate electron acceptor for the enzyme in this species is believed to be plastoquinone. Couples the redox reaction to proton translocation, and thus conserves the redox energy in a proton gradient. In Acorus calamus var. americanus (American sweet flag), this protein is NAD(P)H-quinone oxidoreductase subunit H, chloroplastic.